Here is a 978-residue protein sequence, read N- to C-terminus: Calsyntenin-1 (978 aa).

The first 26 residues, 1–26 (MTFHKTFGYGCIVLICFELLFAGVET), serve as a signal peptide directing secretion. The Extracellular portion of the chain corresponds to 27–876 (SSENDDEYLT…SFIHKAEGSH (850 aa)). 2 Cadherin domains span residues 37–143 (QKEI…APTF) and 144–249 (LEPS…MPER). A glycan (N-linked (GlcNAc...) asparagine) is linked at N53. N304, N486, N608, and N823 each carry an N-linked (GlcNAc...) asparagine glycan. Residues 877-897 (VTMLIILVSVFLAVLLCGVSI) form a helical membrane-spanning segment. Topologically, residues 898–978 (ARLKNNQKYI…EWDNSNIFQQ (81 aa)) are cytoplasmic. The interval 937-958 (ADVTSDASSESENSESEDEEAL) is disordered. Residues 948 to 957 (ENSESEDEEA) show a composition bias toward acidic residues.

This sequence belongs to the calsyntenin family.

It localises to the postsynaptic cell membrane. In terms of biological role, postsynaptic adhesion molecule that binds to presynaptic neurexins to mediate both excitatory and inhibitory synapse formation. Promotes synapse development by acting as a cell adhesion molecule at the postsynaptic membrane, which associates with neurexin-alpha at the presynaptic membrane. In Drosophila melanogaster (Fruit fly), this protein is Calsyntenin-1 (Cals).